The following is a 1091-amino-acid chain: Protein diaphanous (1091 aa).

Positions 1–37 (MSRHEKTKSTGGGLLDSLFGRPSKSKGGTISSGTLAH) are disordered. The basic region stretch occupies residues 1-56 (MSRHEKTKSTGGGLLDSLFGRPSKSKGGTISSGTLAHGGRPVSADNYVVPGVEDFE). Residues 25-34 (SKGGTISSGT) show a composition bias toward low complexity. The region spanning 59 to 431 (IQQLSVAELD…QIVFHKGYCD (373 aa)) is the GBD/FH3 domain. Positions 455–496 (KAKESKRSEEYEKKIEQLESAKQEAEAKAAHLEEKVKLMEAN) form a coiled coil. 3 disordered regions span residues 499–589 (AAPS…MMMG), 994–1021 (RLQEAREQSAREQQERQQRKKAVVDMDA), and 1039–1072 (GSAFGQRNRQARRQRPAGAERRAQLSRSRSRTRV). The span at 512 to 572 (PMPPPPPGGG…MGGPPPPPMP (61 aa)) shows a compositional bias: pro residues. The 85-residue stretch at 512–596 (PMPPPPPGGG…MMGPMVPVLP (85 aa)) folds into the FH1 domain. An FH2 domain is found at 601-1001 (PKKKWDVKNP…KRRLQEAREQ (401 aa)). Residues 994-1010 (RLQEAREQSAREQQERQ) show a composition bias toward basic and acidic residues. The DAD domain occupies 1022–1054 (PQTQEGVMDSLLEALQTGSAFGQRNRQARRQRP).

It belongs to the formin homology family. Diaphanous subfamily. As to quaternary structure, may interact (via CBD/FH3 domain) with Rho1.

It is found in the cytoplasm. It localises to the cytoskeleton. The protein resides in the cleavage furrow. Its subcellular location is the apical cell membrane. In terms of biological role, required for cytokinesis in both mitosis and meiosis. Has a role in actin cytoskeleton organization and is essential for many, if not all, actin-mediated events involving membrane invagination. May serve as a mediator between signaling molecules and actin organizers at specific phases of the cell cycle. Possible component of the contractile ring or may control its function. In Drosophila melanogaster (Fruit fly), this protein is Protein diaphanous (dia).